The following is a 775-amino-acid chain: Phosphoribosylformylglycinamidine synthase subunit PurL (775 aa).

Histidine 81 is an active-site residue. ATP contacts are provided by tyrosine 84 and lysine 123. Position 125 (glutamate 125) interacts with Mg(2+). Substrate contacts are provided by residues 126-129 (SHNH) and arginine 148. The Proton acceptor role is filled by histidine 127. Mg(2+) is bound at residue aspartate 149. A substrate-binding site is contributed by glutamine 272. A Mg(2+)-binding site is contributed by aspartate 300. 344 to 346 (ESQ) is a substrate binding site. The ATP site is built by aspartate 525 and glycine 562. A Mg(2+)-binding site is contributed by asparagine 563. Serine 565 is a substrate binding site.

Belongs to the FGAMS family. As to quaternary structure, monomer. Part of the FGAM synthase complex composed of 1 PurL, 1 PurQ and 2 PurS subunits.

It localises to the cytoplasm. The enzyme catalyses N(2)-formyl-N(1)-(5-phospho-beta-D-ribosyl)glycinamide + L-glutamine + ATP + H2O = 2-formamido-N(1)-(5-O-phospho-beta-D-ribosyl)acetamidine + L-glutamate + ADP + phosphate + H(+). Its pathway is purine metabolism; IMP biosynthesis via de novo pathway; 5-amino-1-(5-phospho-D-ribosyl)imidazole from N(2)-formyl-N(1)-(5-phospho-D-ribosyl)glycinamide: step 1/2. Part of the phosphoribosylformylglycinamidine synthase complex involved in the purines biosynthetic pathway. Catalyzes the ATP-dependent conversion of formylglycinamide ribonucleotide (FGAR) and glutamine to yield formylglycinamidine ribonucleotide (FGAM) and glutamate. The FGAM synthase complex is composed of three subunits. PurQ produces an ammonia molecule by converting glutamine to glutamate. PurL transfers the ammonia molecule to FGAR to form FGAM in an ATP-dependent manner. PurS interacts with PurQ and PurL and is thought to assist in the transfer of the ammonia molecule from PurQ to PurL. The sequence is that of Phosphoribosylformylglycinamidine synthase subunit PurL from Agrobacterium fabrum (strain C58 / ATCC 33970) (Agrobacterium tumefaciens (strain C58)).